Consider the following 345-residue polypeptide: NADH-quinone oxidoreductase subunit H (345 aa).

The next 8 membrane-spanning stretches (helical) occupy residues 9 to 29 (ALGAFLVINAMLLSASLLVFA), 82 to 102 (VVMVVIAMTTASLIPFAEGVV), 108 to 128 (VGVIMLLALTSISVYGVTLAG), 154 to 174 (MGLAVISVVLIAGSLNFMEIV), 183 to 203 (LLGWNAVRNPIGCLIFIVTAF), 241 to 261 (YVNWFIASFFIVTLFFGGYLV), 282 to 302 (LLQFVSLMLKVSFFSFVFIWV), and 325 to 345 (IALANAILIALGVVLFGAVGL).

Belongs to the complex I subunit 1 family. In terms of assembly, NDH-1 is composed of 14 different subunits. Subunits NuoA, H, J, K, L, M, N constitute the membrane sector of the complex.

The protein resides in the cell inner membrane. It catalyses the reaction a quinone + NADH + 5 H(+)(in) = a quinol + NAD(+) + 4 H(+)(out). In terms of biological role, NDH-1 shuttles electrons from NADH, via FMN and iron-sulfur (Fe-S) centers, to quinones in the respiratory chain. The immediate electron acceptor for the enzyme in this species is believed to be ubiquinone. Couples the redox reaction to proton translocation (for every two electrons transferred, four hydrogen ions are translocated across the cytoplasmic membrane), and thus conserves the redox energy in a proton gradient. This subunit may bind ubiquinone. This chain is NADH-quinone oxidoreductase subunit H, found in Salinibacter ruber (strain DSM 13855 / M31).